We begin with the raw amino-acid sequence, 82 residues long: P2Y purinoceptor 2 (82 aa).

A helical transmembrane segment spans residues Leu-1 to Cys-25. Residues Arg-26–Thr-35 lie on the Cytoplasmic side of the membrane. The helical transmembrane segment at Tyr-36 to Tyr-56 threads the bilayer. Over Tyr-57–Arg-75 the chain is Extracellular. A helical transmembrane segment spans residues Phe-76 to Leu-82.

Belongs to the G-protein coupled receptor 1 family. As to expression, expressed in brain, heart, stria vascularis and vestibular labyrinth.

Its subcellular location is the cell membrane. Receptor for ATP and UTP coupled to G-proteins that activate a phosphatidylinositol-calcium second messenger system. Not activated by UDP. The sequence is that of P2Y purinoceptor 2 (P2RY2) from Meriones unguiculatus (Mongolian jird).